Consider the following 281-residue polypeptide: Energy-coupling factor transporter ATP-binding protein EcfA1 (281 aa).

Residues isoleucine 7–aspartate 242 form the ABC transporter domain. Glycine 42 to serine 49 contacts ATP.

This sequence belongs to the ABC transporter superfamily. Energy-coupling factor EcfA family. In terms of assembly, forms a stable energy-coupling factor (ECF) transporter complex composed of 2 membrane-embedded substrate-binding proteins (S component), 2 ATP-binding proteins (A component) and 2 transmembrane proteins (T component).

Its subcellular location is the cell membrane. Its function is as follows. ATP-binding (A) component of a common energy-coupling factor (ECF) ABC-transporter complex. Unlike classic ABC transporters this ECF transporter provides the energy necessary to transport a number of different substrates. The sequence is that of Energy-coupling factor transporter ATP-binding protein EcfA1 from Bacillus licheniformis (strain ATCC 14580 / DSM 13 / JCM 2505 / CCUG 7422 / NBRC 12200 / NCIMB 9375 / NCTC 10341 / NRRL NRS-1264 / Gibson 46).